Here is a 472-residue protein sequence, read N- to C-terminus: Protein nucleotidyltransferase YdiU (472 aa).

Positions 86, 88, 89, 109, 121, 122, 172, and 179 each coordinate ATP. Asp-244 serves as the catalytic Proton acceptor. Mg(2+) contacts are provided by Asn-245 and Asp-254. ATP is bound at residue Asp-254.

The protein belongs to the SELO family. Mg(2+) serves as cofactor. Requires Mn(2+) as cofactor.

The catalysed reaction is L-seryl-[protein] + ATP = 3-O-(5'-adenylyl)-L-seryl-[protein] + diphosphate. It catalyses the reaction L-threonyl-[protein] + ATP = 3-O-(5'-adenylyl)-L-threonyl-[protein] + diphosphate. It carries out the reaction L-tyrosyl-[protein] + ATP = O-(5'-adenylyl)-L-tyrosyl-[protein] + diphosphate. The enzyme catalyses L-histidyl-[protein] + UTP = N(tele)-(5'-uridylyl)-L-histidyl-[protein] + diphosphate. The catalysed reaction is L-seryl-[protein] + UTP = O-(5'-uridylyl)-L-seryl-[protein] + diphosphate. It catalyses the reaction L-tyrosyl-[protein] + UTP = O-(5'-uridylyl)-L-tyrosyl-[protein] + diphosphate. In terms of biological role, nucleotidyltransferase involved in the post-translational modification of proteins. It can catalyze the addition of adenosine monophosphate (AMP) or uridine monophosphate (UMP) to a protein, resulting in modifications known as AMPylation and UMPylation. The polypeptide is Protein nucleotidyltransferase YdiU (Ruegeria sp. (strain TM1040) (Silicibacter sp.)).